We begin with the raw amino-acid sequence, 229 residues long: Lipoprotein-releasing system ATP-binding protein LolD (229 aa).

The region spanning 7 to 229 is the ABC transporter domain; that stretch reads LQCINLTKSF…KNGQLFNNKN (223 aa). 43–50 lines the ATP pocket; sequence GKSGSGKS.

The protein belongs to the ABC transporter superfamily. Lipoprotein translocase (TC 3.A.1.125) family. As to quaternary structure, the complex is composed of two ATP-binding proteins (LolD) and two transmembrane proteins (LolC and LolE).

The protein localises to the cell inner membrane. Its function is as follows. Part of the ABC transporter complex LolCDE involved in the translocation of mature outer membrane-directed lipoproteins, from the inner membrane to the periplasmic chaperone, LolA. Responsible for the formation of the LolA-lipoprotein complex in an ATP-dependent manner. The polypeptide is Lipoprotein-releasing system ATP-binding protein LolD (Buchnera aphidicola subsp. Schizaphis graminum (strain Sg)).